We begin with the raw amino-acid sequence, 262 residues long: tRNA pseudouridine synthase A (262 aa).

The active-site Nucleophile is D51. Residue Y109 participates in substrate binding.

This sequence belongs to the tRNA pseudouridine synthase TruA family. As to quaternary structure, homodimer.

The catalysed reaction is uridine(38/39/40) in tRNA = pseudouridine(38/39/40) in tRNA. Its function is as follows. Formation of pseudouridine at positions 38, 39 and 40 in the anticodon stem and loop of transfer RNAs. This is tRNA pseudouridine synthase A from Actinobacillus pleuropneumoniae serotype 3 (strain JL03).